Consider the following 232-residue polypeptide: Sugar fermentation stimulation protein homolog (232 aa).

This sequence belongs to the SfsA family.

This Alkaliphilus metalliredigens (strain QYMF) protein is Sugar fermentation stimulation protein homolog.